The sequence spans 449 residues: MKPFSPEVSPDPCPATAAHLLRTYTLFLTLLELAQGCRGSMVSNRPFITVWNADTHWCLKDHGVDVDVSVFDVVANKEQNFQGPNMTIFYREELGTYPYYTPTGEPVFGGLPQNASLVTHLAHAFQDIKAAMPEPDFSGLAVIDWEAWRPRWAFNWDSKDIYQQRSMELVRAEHPDWPETLVEAEAQGQFQEAAEAWMAGTLQLGQVLRPRGLWGYYGFPDCYNYDFLSPNYTGQCSLSIHDQNDQLGWLWNQSYALYPSIYLPAALMGTGKSQMYVRYRVQEAFRLALVSRDPHVPIMPYVQIFYEKTDYLLPLEELEHSLGESAAQGAAGAVLWISSEKTSTKESCQAIKAYMDSTLGPFILNVTSAALLCSEALCSGRGRCVRHPSYPEALLTLSPASFSIEPTHDGRPLSLKGTLSLKDRAQMAMKFKCRCYRGWSGEWCKKQDM.

The N-terminal stretch at 1 to 39 (MKPFSPEVSPDPCPATAAHLLRTYTLFLTLLELAQGCRG) is a signal peptide. 2 disulfides stabilise this stretch: cysteine 58–cysteine 348 and cysteine 222–cysteine 236. N-linked (GlcNAc...) asparagine glycosylation is found at asparagine 85 and asparagine 114. The Proton donor role is filled by glutamate 146. 3 N-linked (GlcNAc...) asparagine glycosylation sites follow: asparagine 231, asparagine 252, and asparagine 365. 3 cysteine pairs are disulfide-bonded: cysteine 373-cysteine 384, cysteine 378-cysteine 433, and cysteine 435-cysteine 444. The EGF-like domain maps to 433-444 (CRCYRGWSGEWC).

Belongs to the glycosyl hydrolase 56 family.

Its subcellular location is the secreted. It is found in the lysosome. The enzyme catalyses Random hydrolysis of (1-&gt;4)-linkages between N-acetyl-beta-D-glucosamine and D-glucuronate residues in hyaluronate.. In terms of biological role, may have a role in promoting tumor progression. May block the TGFB1-enhanced cell growth. Overexpression of HYAL1 suppressed the growth rate of colon carcinoma cell tumors in an experimental model. The protein is Hyaluronidase-1 (Hyal1) of Rattus norvegicus (Rat).